The following is a 376-amino-acid chain: Putative peptide import ATP-binding protein BMEII0205 (376 aa).

Residues 1–25 (MPLRPALHLRTGKLRQTPTHNEPDG) are disordered. Positions 64 to 314 (VRTDDLVRDF…PLHPYSRALL (251 aa)) constitute an ABC transporter domain. 106–113 (GESGSGKS) contacts ATP.

Belongs to the ABC transporter superfamily. In terms of assembly, the complex is composed of two ATP-binding proteins (BMEII0205 and BMEII0206), two transmembrane proteins (BMEII0207/BMEII0208 and BMEII0209) and a solute-binding protein (BMEII0210).

It localises to the cell inner membrane. Functionally, probably part of an ABC transporter complex that could be involved in peptide import. Probably responsible for energy coupling to the transport system. The sequence is that of Putative peptide import ATP-binding protein BMEII0205 from Brucella melitensis biotype 1 (strain ATCC 23456 / CCUG 17765 / NCTC 10094 / 16M).